We begin with the raw amino-acid sequence, 1621 residues long: Ferredoxin-dependent glutamate synthase, chloroplastic (1621 aa).

The transit peptide at 1-57 directs the protein to the chloroplast; that stretch reads MALQSAPKLLYSSPSPSVFSANERRVAFSDFVGLSKKRSRRRRIAGTFRNFPALSAV. Cys-105 (nucleophile) is an active-site residue. Residues 105-504 form the Glutamine amidotransferase type-2 domain; it reads CGVGFIANLD…PGMMISVDLS (400 aa). Residue 1183–1240 participates in FMN binding; it reads LSETHQTLISNGLRERVILRVDGGLKCGVDVMMAAAMGADEYGFGSLAMIATGCVMAR. Positions 1236, 1242, and 1247 each coordinate [3Fe-4S] cluster.

Belongs to the glutamate synthase family. As to quaternary structure, interacts with ferredoxin. Interacts (via FMN-binding domain) with SQD1. [3Fe-4S] cluster serves as cofactor. FMN is required as a cofactor. As to expression, expressed in young leaves. Not detected in mature leaves.

It is found in the plastid. Its subcellular location is the chloroplast stroma. It catalyses the reaction 2 oxidized [2Fe-2S]-[ferredoxin] + 2 L-glutamate = L-glutamine + 2 reduced [2Fe-2S]-[ferredoxin] + 2-oxoglutarate + 2 H(+). It functions in the pathway amino-acid biosynthesis; L-glutamate biosynthesis via GLT pathway; L-glutamate from 2-oxoglutarate and L-glutamine (ferredoxin route): step 1/1. Its pathway is energy metabolism; nitrogen metabolism. Inhibited by N-bromosuccinimide, which is specific for modification of tryptophan residues probably involved in the electron transfer from ferredoxin. Functionally, catalyzes the reductive conversion of 2-oxoglutarate plus glutamine to two molecules of glutamate, using reduced ferredoxin as the electron donor. Contains one FMN but no FAD. The FMN-binding domain is also involved in the delivery of sulfite to the reaction center of SQD1. This chain is Ferredoxin-dependent glutamate synthase, chloroplastic, found in Spinacia oleracea (Spinach).